The sequence spans 885 residues: Alanine--tRNA ligase (885 aa).

Zn(2+)-binding residues include histidine 572, histidine 576, cysteine 675, and histidine 679.

The protein belongs to the class-II aminoacyl-tRNA synthetase family. The cofactor is Zn(2+).

The protein localises to the cytoplasm. It catalyses the reaction tRNA(Ala) + L-alanine + ATP = L-alanyl-tRNA(Ala) + AMP + diphosphate. In terms of biological role, catalyzes the attachment of alanine to tRNA(Ala) in a two-step reaction: alanine is first activated by ATP to form Ala-AMP and then transferred to the acceptor end of tRNA(Ala). Also edits incorrectly charged Ser-tRNA(Ala) and Gly-tRNA(Ala) via its editing domain. In Leifsonia xyli subsp. xyli (strain CTCB07), this protein is Alanine--tRNA ligase.